The primary structure comprises 301 residues: Heme A synthase (301 aa).

Residues 1–7 (MHKGLKR) lie on the Cytoplasmic side of the membrane. The helical transmembrane segment at 8 to 28 (LGVITSLGVLLVLIQGALVTN) threads the bilayer. The Extracellular segment spans residues 29–56 (TGSGEGCGQTWPLCFGQVIPLDPPPETV). Cysteines 35 and 42 form a disulfide. Residues 57 to 77 (IEFSHRLVAGIVGMLVILMAI) traverse the membrane as a helical segment. The active site involves Glu-58. Heme o is bound at residue His-61. Residues 78–92 (WSWRRLKHMPETRFL) are Cytoplasmic-facing. Residues 93-113 (AVISVFMIIFQGLLGAGAVVF) traverse the membrane as a helical segment. At 114–117 (GQSD) the chain is on the extracellular side. The helical transmembrane segment at 118-138 (LIMALHFGFSALSFASVVLLT) threads the bilayer. His-123 lines the heme o pocket. At 139–159 (RLAFEDSNPQKQYAPIVSKAY) the chain is on the cytoplasmic side. A helical transmembrane segment spans residues 160–180 (KGYVIFVAIYSYVAIYTGAYV). The Extracellular portion of the chain corresponds to 181–215 (KHTNATLACSGFPLCNGQWVPDVFTEAIGVQLLHR). A disulfide bridge connects residues Cys-189 and Cys-195. His-214 contributes to the heme b binding site. The helical transmembrane segment at 216-236 (SAAILLSLLLLVLFIWTVKTF) threads the bilayer. At 237–240 (RASR) the chain is on the cytoplasmic side. Residues 241–261 (VLVVCASLAMLLVIGQAASGV) form a helical membrane-spanning segment. The Extracellular segment spans residues 262–274 (AVVLTYNATLTLG). The chain crosses the membrane as a helical span at residues 275 to 295 (IFHALLISLLFTLLCYMVMLV). A heme b-binding site is contributed by His-277. At 296–301 (TRHKAK) the chain is on the cytoplasmic side.

This sequence belongs to the COX15/CtaA family. Type 1 subfamily. In terms of assembly, interacts with CtaB. Heme b serves as cofactor.

It is found in the cell membrane. The catalysed reaction is Fe(II)-heme o + 2 A + H2O = Fe(II)-heme a + 2 AH2. It functions in the pathway porphyrin-containing compound metabolism; heme A biosynthesis; heme A from heme O: step 1/1. Its function is as follows. Catalyzes the conversion of heme O to heme A by two successive hydroxylations of the methyl group at C8. The first hydroxylation forms heme I, the second hydroxylation results in an unstable dihydroxymethyl group, which spontaneously dehydrates, resulting in the formyl group of heme A. The sequence is that of Heme A synthase from Shouchella clausii (strain KSM-K16) (Alkalihalobacillus clausii).